The chain runs to 492 residues: FAD-containing monooxygenase EthA (492 aa).

FAD-binding positions include serine 15, glutamate 36, 44 to 47, aspartate 56, and valine 104; that span reads TWDL. Residue 54–56 coordinates NADP(+); it reads RSD. Residues 183–189 and 207–208 contribute to the NADP(+) site; these read SGATAVT and RS.

The protein belongs to the FAD-binding monooxygenase family. FAD serves as cofactor.

The protein resides in the cell membrane. It catalyses the reaction ethionamide + NADPH + O2 + H(+) = ethionamide S-oxide + NADP(+) + H2O. In terms of biological role, monooxygenase able to convert a wide range of ketones to the corresponding esters or lactones via a Baeyer-Villiger oxidation reaction. Can act on long-chain aliphatic ketones (2-hexanone to 2-dodecanone) and on aromatic ketones (phenylacetone and benzylacetone). Is also able to catalyze enantioselective sulfoxidation of methyl-p-tolylsulfide. In vivo, likely functions as a BVMO, but the exact nature of the physiological substrate(s) remains to be established. Its function is as follows. Is responsible for the activation of several thiocarbamide-containing pro-drugs, such as ethionamide (ETH), isoxyl (ISO) and thiacetazone (TAC), into reactive species. This chain is FAD-containing monooxygenase EthA (ethA), found in Mycolicibacterium smegmatis (strain ATCC 700084 / mc(2)155) (Mycobacterium smegmatis).